Here is a 291-residue protein sequence, read N- to C-terminus: Insulin-like growth factor-binding protein 3 (291 aa).

The N-terminal stretch at 1 to 27 (MQRARPTLWAAALTLLVLLRGPPVARA) is a signal peptide. Residues 28 to 134 (GASSAGLGPV…AYLLPAPPAP (107 aa)) are IGF-binding. Residues 36-117 (PVVRCEPCDA…LDGRGLCVNA (82 aa)) form the IGFBP N-terminal domain. Cystine bridges form between cysteine 40-cysteine 67, cysteine 43-cysteine 69, cysteine 51-cysteine 70, cysteine 58-cysteine 73, cysteine 81-cysteine 94, and cysteine 88-cysteine 114. N-linked (GlcNAc...) (complex) asparagine glycosylation is found at asparagine 116 and asparagine 136. Disordered stretches follow at residues 130–162 (APPAPGNASESEEDRSAGSVESPSVSSTHRVSD) and 189–211 (DYESQSTDTQNFSSESKRETEYG). The segment covering 146–156 (AGSVESPSVSS) has biased composition (low complexity). Serine 148 is modified (phosphoserine; by FAM20C). A compositionally biased stretch (polar residues) spans 191–202 (ESQSTDTQNFSS). Serine 194 bears the Phosphoserine; by CK2 mark. N-linked (GlcNAc...) (complex) asparagine glycosylation is present at asparagine 199. Serine 201 bears the Phosphoserine; by FAM20C mark. Residue serine 202 is modified to Phosphoserine; by CK2. Positions 210-285 (YGPCRREMED…TTKGKEDVHC (76 aa)) constitute a Thyroglobulin type-1 domain. 3 disulfides stabilise this stretch: cysteine 213/cysteine 240, cysteine 251/cysteine 262, and cysteine 264/cysteine 285.

Interacts with XLKD1. Binds IGF2 more than IGF1. Forms a ternary complex of about 140 to 150 kDa with IGF1 or IGF2 and a 85 kDa glycoprotein (ALS). Interacts with humanin; humanin competes with importin KPNB1 for binding to IGFBP3, blocking IGFBP3 nuclear import and IGFBP3-mediated apoptosis. Interacts with TMEM219. Interacts with RXRA; this interaction modulates the transcriptional activity of RXRA. Interacts with LRP1; this interaction mediates cell growth inhibition independent of IGF1. In terms of processing, phosphorylated by FAM20C in the extracellular medium. Phosphorylated by CK2; resulting in decreased nuclear localization. As to expression, expressed by most tissues. Present in plasma.

Its subcellular location is the secreted. The protein localises to the nucleus. Its function is as follows. Multifunctional protein that plays a critical role in regulating the availability of IGFs such as IGF1 and IGF2 to their receptors and thereby regulates IGF-mediated cellular processes including proliferation, differentiation, and apoptosis in a cell-type specific manner. Also exhibits IGF-independent antiproliferative and apoptotic effects mediated by its receptor TMEM219/IGFBP-3R. Inhibits the positive effect of humanin on insulin sensitivity. Promotes testicular germ cell apoptosis. Acts via LRP-1/alpha2M receptor, also known as TGF-beta type V receptor, to mediate cell growth inhibition independent of IGF1. Mechanistically, induces serine-specific dephosphorylation of IRS1 or IRS2 upon ligation to its receptor, leading to the inhibitory cascade. In the nucleus, interacts with transcription factors such as retinoid X receptor-alpha/RXRA to regulate transcriptional signaling and apoptosis. In Homo sapiens (Human), this protein is Insulin-like growth factor-binding protein 3 (IGFBP3).